A 403-amino-acid chain; its full sequence is Keratin, type I cytoskeletal 19 (403 aa).

Residues 1–82 (MTSYSYRQTS…AVSDGLLSGN (82 aa)) form a head region. R7 is subject to Omega-N-methylarginine. Phosphoserine occurs at positions 14 and 22. R24 is subject to Asymmetric dimethylarginine; alternate. R24 carries the omega-N-methylarginine; alternate modification. S27 is modified (phosphoserine). The residue at position 32 (R32) is an Omega-N-methylarginine. Phosphoserine is present on residues S35 and S40. Omega-N-methylarginine is present on residues R43 and R51. At S57 the chain carries Phosphoserine. Position 64 is an omega-N-methylarginine (R64). Phosphoserine is present on residues S67 and S75. The tract at residues 83-118 (EKITMQNLNDRLASYLDKVRALEQANGELEVKIRDW) is coil 1A. The 312-residue stretch at 83-394 (EKITMQNLND…SLLEGQEAHY (312 aa)) folds into the IF rod domain. A linker 1 region spans residues 119 to 136 (YQKQGPGPSRDYNHYFKT). The tract at residues 137–228 (IEDLRDKILG…KNHEEEITAL (92 aa)) is coil 1B. The interval 229–251 (RSQVGGQVSVEVDSTPGVDLAKI) is linker 12. Positions 247–393 (DLAKILSEMR…RSLLEGQEAH (147 aa)) are necessary for interaction with PNN. Positions 252-390 (LSEMRSQYEI…ATYRSLLEGQ (139 aa)) are coil 2. Phosphothreonine is present on T326. The rod-like helical tail stretch occupies residues 391 to 403 (EAHYNNLPTPKAI). Y394 carries the phosphotyrosine modification.

The protein belongs to the intermediate filament family. In terms of assembly, heterotetramer of two type I and two type II keratins. Interacts with PNN and the actin-binding domain of DMD.

Its function is as follows. Involved in the organization of myofibers. Together with KRT8, helps to link the contractile apparatus to dystrophin at the costameres of striated muscle. This Mus musculus (Mouse) protein is Keratin, type I cytoskeletal 19 (Krt19).